The sequence spans 82 residues: Small ribosomal subunit protein bS18A (82 aa).

This sequence belongs to the bacterial ribosomal protein bS18 family. As to quaternary structure, part of the 30S ribosomal subunit. Forms a tight heterodimer with protein bS6.

Binds as a heterodimer with protein bS6 to the central domain of the 16S rRNA, where it helps stabilize the platform of the 30S subunit. The sequence is that of Small ribosomal subunit protein bS18A from Streptomyces griseus subsp. griseus (strain JCM 4626 / CBS 651.72 / NBRC 13350 / KCC S-0626 / ISP 5235).